The primary structure comprises 57 residues: Lantibiotic nisin-A (57 aa).

Positions 1 to 23 (MSTKDFNLDLVSVSKKDSGASPR) are excised as a propeptide. A (Z)-2,3-didehydrobutyrine modification is found at Thr-25. A cross-link (lanthionine (Ser-Cys)) is located at residues 26-30 (SISLC). At Ser-28 the chain carries 2,3-didehydroalanine (Ser). Cross-links (beta-methyllanthionine (Thr-Cys)) lie at residues 31 to 34 (TPGC), 36 to 42 (TGALMGC), 46 to 49 (TATC), and 48 to 51 (TCHC). Ser-56 carries the 2,3-didehydroalanine (Ser) modification.

It belongs to the type A lantibiotic family. Post-translationally, maturation of lantibiotics involves the enzymatic conversion of Thr, and Ser into dehydrated AA and the formation of thioether bonds with cysteine. This is followed by membrane translocation and cleavage of the modified precursor. In terms of processing, the structure of the 2,3-didehydrobutyrine is not discussed in PubMed:8454055. However, in Fig. 1 the residue is diagrammed as the Z-isomer.

In terms of biological role, lanthionine-containing peptide antibiotic (lantibiotic) active on Gram-positive bacteria. The bactericidal activity of lantibiotics is based on depolarization of energized bacterial cytoplasmic membranes, initiated by the formation of aqueous transmembrane pores. This is Lantibiotic nisin-A (spaN) from Lactococcus lactis subsp. lactis (Streptococcus lactis).